The primary structure comprises 392 residues: MSAQAQMRAMLDQLMGTSRDGDTTRQRIKFSDDRVCKSHLLNCCPHDVLSGTRMDLGECLKVHDLALRADYEIASKEQDFFFELDAMDHLQSFIADCDRRTEVAKKRLAETQEEISAEVAAKAERVHELNEEIGKLLAKVEQLGAEGNVEESQKVMDEVEKARAKKREAEEVYRNSMPASSFQQQKLRVCEVCSAYLGLHDNDRRLADHFGGKLHLGFIEIREKLEELKRVVAEKQEKRNQERLKRREEREREEREKLRRSRSHSKNPKRSRSREHRRHRSRSMSRERKRRTRSKSREKRHRHRSRSSSRSRSRSHQRSRHSSRDRSRERSKRRSSKERFRDQDLASCDRDRSSRDRSPRDRDRKDKKRSYESANGRSEDRRSSEEREAGEI.

A Phosphoserine modification is found at S18. Positions E102–M177 form a coiled coil. Residues K235–K257 are compositionally biased toward basic and acidic residues. The disordered stretch occupies residues K235–I392. A compositionally biased stretch (basic residues) spans L258–H321. 2 positions are modified to 5-hydroxylysine; by JMJD6: K266 and K269. Composition is skewed to basic and acidic residues over residues K337 to R364 and R377 to I392.

It belongs to the Luc7 family. Interacts with SCNM1.

It is found in the nucleus speckle. The protein localises to the nucleus. Its subcellular location is the nucleoplasm. In terms of biological role, may bind to RNA via its Arg/Ser-rich domain. The chain is Putative RNA-binding protein Luc7-like 2 (LUC7L2) from Homo sapiens (Human).